We begin with the raw amino-acid sequence, 268 residues long: GTP cyclohydrolase III (268 aa).

It belongs to the archaeal-type GTP cyclohydrolase family. In terms of assembly, homotrimer. The cofactor is Mg(2+).

The enzyme catalyses GTP + 3 H2O = 2-amino-5-formylamino-6-(5-phospho-D-ribosylamino)pyrimidin-4(3H)-one + 2 phosphate + 2 H(+). Its function is as follows. Catalyzes the formation of 2-amino-5-formylamino-6-ribofuranosylamino-4(3H)-pyrimidinone ribonucleotide monophosphate and inorganic phosphate from GTP. Also has an independent pyrophosphate phosphohydrolase activity. The sequence is that of GTP cyclohydrolase III (gch3) from Methanocaldococcus jannaschii (strain ATCC 43067 / DSM 2661 / JAL-1 / JCM 10045 / NBRC 100440) (Methanococcus jannaschii).